The primary structure comprises 95 residues: Suppressor of silencing 2b (95 aa).

Residues 8 to 18 (LHEIIRKLERM) form a homotetramerization region. Residues 8 to 40 (LHEIIRKLERMNQKKQAQRKRHKLNRKERGHKS) adopt a coiled-coil conformation. The interval 16–49 (ERMNQKKQAQRKRHKLNRKERGHKSPSEQRRSEL) is disordered. Basic residues predominate over residues 23–37 (QAQRKRHKLNRKERG). Positions 26–30 (RKRHK) match the Nuclear localization signal motif. Over residues 38 to 49 (HKSPSEQRRSEL) the composition is skewed to basic and acidic residues.

Belongs to the cucumovirus/ilarvirus protein 2b family. In terms of assembly, homodimer. Homotetramer (dimer of dimers).

Its subcellular location is the host nucleus. Its function is as follows. Acts as a suppressor of RNA-mediated gene silencing, also known as post-transcriptional gene silencing (PTGS), a mechanism of plant viral defense that limits the accumulation of viral RNAs. Forms a homodimer to measure siRNA duplex in a length-preference mode. Binds to both siRNA duplexes (19bp) and long siRNA duplexes (30bp). This Canna (Florist's daisy) protein is Suppressor of silencing 2b.